The sequence spans 490 residues: Keratin, type II cytoskeletal 8 (490 aa).

The span at 1-27 shows a compositional bias: polar residues; sequence MSIRVTQKSYKMSTSGPRAFSSRSFTS. Residues 1-48 form a disordered region; that stretch reads MSIRVTQKSYKMSTSGPRAFSSRSFTSGPGARISSSSFSRVGSSSSSF. Residues 1 to 96 form a head region; sequence MSIRVTQKSY…DPNIQAVRTQ (96 aa). Position 9 is a phosphoserine; by PKC/PRKCE (S9). K11 participates in a covalent cross-link: Glycyl lysine isopeptide (Lys-Gly) (interchain with G-Cter in SUMO2). A phosphoserine mark is found at S13, S15, S21, and S22. R23 is subject to Omega-N-methylarginine. Position 24 is a phosphoserine; by PKC/PRKCE (S24). T26 is subject to Phosphothreonine. S27 carries the post-translational modification Phosphoserine. Position 32 is an omega-N-methylarginine (R32). Phosphoserine occurs at positions 34, 37, and 39. Positions 34–48 are enriched in low complexity; the sequence is SSSSFSRVGSSSSSF. An Omega-N-methylarginine modification is found at R40. Phosphoserine is present on residues S43, S44, and S47. Asymmetric dimethylarginine; alternate is present on R49. R49 bears the Omega-N-methylarginine; alternate mark. S51 is subject to Phosphoserine. S80 is modified (phosphoserine; by MAPK). Residues 97 to 132 form a coil 1A region; it reads EKEQIKSLNNKFASFIDKVRFLEQQNKMLETKWSLL. The region spanning 97–408 is the IF rod domain; the sequence is EKEQIKSLNN…KLLEGEESRL (312 aa). The residue at position 107 (K107) is an N6-malonyllysine. Glycyl lysine isopeptide (Lys-Gly) (interchain with G-Cter in SUMO2) cross-links involve residues K128 and K136. Residues 133–149 form a linker 1 region; that stretch reads QQQKTSRSNMDNMFESY. The segment at 150–241 is coil 1B; the sequence is INNLRRQLEA…QIHEEEIREL (92 aa). Residue K203 forms a Glycyl lysine isopeptide (Lys-Gly) (interchain with G-Cter in SUMO1); alternate linkage. Residue K203 forms a Glycyl lysine isopeptide (Lys-Gly) (interchain with G-Cter in SUMO2); alternate linkage. K213 is subject to N6-acetyllysine. Positions 242 to 265 are linker 12; the sequence is QSQISDTSVVLSMDNSRSLDMDGI. S259 and S280 each carry phosphoserine. The segment at 266-403 is coil 2; it reads IAEVRAQYED…ITTYRKLLEG (138 aa). The interval 267–387 is necessary for interaction with PNN; the sequence is AEVRAQYEDI…REYQELMNVK (121 aa). Residue K291 forms a Glycyl lysine isopeptide (Lys-Gly) (interchain with G-Cter in SUMO2) linkage. K301 participates in a covalent cross-link: Glycyl lysine isopeptide (Lys-Gly) (interchain with G-Cter in SUMO2); alternate. The residue at position 301 (K301) is an N6-acetyllysine; alternate. A Glycyl lysine isopeptide (Lys-Gly) (interchain with G-Cter in SUMO2) cross-link involves residue K310. Residue K331 forms a Glycyl lysine isopeptide (Lys-Gly) (interchain with G-Cter in SUMO2); alternate linkage. The residue at position 331 (K331) is an N6-acetyllysine; alternate. S336 bears the Phosphoserine mark. K399 is covalently cross-linked (Glycyl lysine isopeptide (Lys-Gly) (interchain with G-Cter in SUMO2)). Positions 404-490 are tail; it reads EESRLESGMQ…VSESSDVVSK (87 aa). Residues S406, S410, S416, S423, S430, S432, and S438 each carry the phosphoserine modification. Residue K479 forms a Glycyl lysine isopeptide (Lys-Gly) (interchain with G-Cter in SUMO1); alternate linkage. Residue K479 forms a Glycyl lysine isopeptide (Lys-Gly) (interchain with G-Cter in SUMO2); alternate linkage. Phosphoserine occurs at positions 482, 484, 485, and 489.

Belongs to the intermediate filament family. Heterotetramer of two type I and two type II keratins. Forms a heterodimer with KRT18. Associates with KRT20. Interacts with PLEC isoform 1C, when in a heterodimer with KRT18. Interacts with PNN. When associated with KRT19, interacts with DMD. Interacts with TCHP. Interacts with APEX1. Interacts with GPER1. Interacts with EPPK1. Interacts with PKP1 and PKP2. Post-translationally, phosphorylation on serine residues is enhanced during EGF stimulation and mitosis. Ser-80 phosphorylation plays an important role in keratin filament reorganization. In terms of processing, O-glycosylated. O-GlcNAcylation at multiple sites increases solubility, and decreases stability by inducing proteasomal degradation. O-glycosylated (O-GlcNAcylated), in a cell cycle-dependent manner. As to expression, expressed in abundance in the epithelia of colon, bladder, ileum, and stomach, with lower expression observed in earskin (at protein level). Also expressed in pancreas, liver, dudenum and jejunum.

It localises to the cytoplasm. The protein localises to the nucleus. It is found in the nucleoplasm. Its subcellular location is the nucleus matrix. Its function is as follows. Together with KRT19, helps to link the contractile apparatus to dystrophin at the costameres of striated muscle. The polypeptide is Keratin, type II cytoskeletal 8 (Krt8) (Mus musculus (Mouse)).